The chain runs to 427 residues: Putative zinc protease AlbF (427 aa).

Zn(2+) is bound at residue His66. Catalysis depends on Glu69, which acts as the Proton acceptor. The Zn(2+) site is built by His70 and Glu142.

It belongs to the peptidase M16 family. The cofactor is Zn(2+).

Functionally, required for production of the bacteriocin subtilosin. Could catalyze some step in the processing of presubtilosin. The protein is Putative zinc protease AlbF (albF) of Bacillus subtilis.